Consider the following 681-residue polypeptide: CAI-1 autoinducer sensor kinase/phosphatase CqsS (681 aa).

A run of 4 helical transmembrane segments spans residues 17–37 (LVGWMGFIGFPIYYIVWEFMF), 73–93 (AYYQVVTTLCLPCFFFYMLLM), 112–132 (ILLVHITSVMFVQTFVGIGLA), and 148–168 (MDWTHVPIFLFIYLFGNLFYF). The Histidine kinase domain occupies 187–413 (GIAHEMRNPL…QFTMTFPTIG (227 aa)). Residue His190 is modified to Phosphohistidine; by autocatalysis. Positions 564–681 (TIMVVDDNES…RLFDKIANWI (118 aa)) constitute a Response regulatory domain. A 4-aspartylphosphate modification is found at Asp613.

It is found in the cell membrane. The enzyme catalyses ATP + protein L-histidine = ADP + protein N-phospho-L-histidine.. Functionally, senses the quorum-sensing autoinducer CAI-1 ((S)-3-hydroxytridecan-4-one) which probably functions as an intragenus signal. The sensory signal is then relayed to LuxU and LuxO. In Vibrio campbellii (strain ATCC BAA-1116), this protein is CAI-1 autoinducer sensor kinase/phosphatase CqsS (cqsS).